A 202-amino-acid polypeptide reads, in one-letter code: Small ribosomal subunit protein bS20c (202 aa).

The transit peptide at 1–79 (MATIVQCLSS…KPMRQLIVCE (79 aa)) directs the protein to the chloroplast. The interval 89-110 (SAAKRARQAEKRRVYNKSKKSE) is disordered.

It belongs to the bacterial ribosomal protein bS20 family. Part of the 30S ribosomal subunit.

The protein resides in the plastid. It is found in the chloroplast. In terms of biological role, binds directly to 16S ribosomal RNA. The polypeptide is Small ribosomal subunit protein bS20c (RPS20) (Arabidopsis thaliana (Mouse-ear cress)).